Here is a 1011-residue protein sequence, read N- to C-terminus: DNA-directed RNA polymerase 2, chloroplastic/mitochondrial (1011 aa).

A disordered region spans residues 307-326 (KGDDNEESGGVENETSMKEQ). Catalysis depends on residues D712, K787, and D944.

It belongs to the phage and mitochondrial RNA polymerase family. In terms of assembly, interacts with NIP1 and NIP2.

The protein localises to the plastid. The protein resides in the chloroplast. It is found in the mitochondrion. The enzyme catalyses RNA(n) + a ribonucleoside 5'-triphosphate = RNA(n+1) + diphosphate. Its function is as follows. DNA-dependent RNA polymerase catalyzes the transcription of DNA into RNA using the four ribonucleoside triphosphates as substrates. This is DNA-directed RNA polymerase 2, chloroplastic/mitochondrial (RPOT2) from Arabidopsis thaliana (Mouse-ear cress).